The sequence spans 415 residues: ATP-dependent RNA helicase RhlB (415 aa).

The Q motif signature appears at 9–37 (QRFSDLSLHPIVRDTLAKKGFDFCTPIQA). Positions 40-218 (LPISLNGRDV…FEDMNDPEYI (179 aa)) constitute a Helicase ATP-binding domain. Residue 53-60 (AQTGTGKT) participates in ATP binding. A DEAD box motif is present at residues 164–167 (DEAD). The Helicase C-terminal domain maps to 241–389 (DKMALLLTLM…VSQYETEALL (149 aa)).

Belongs to the DEAD box helicase family. RhlB subfamily. As to quaternary structure, component of the RNA degradosome, which is a multiprotein complex involved in RNA processing and mRNA degradation.

It is found in the cytoplasm. The enzyme catalyses ATP + H2O = ADP + phosphate + H(+). In terms of biological role, DEAD-box RNA helicase involved in RNA degradation. Has RNA-dependent ATPase activity and unwinds double-stranded RNA. This chain is ATP-dependent RNA helicase RhlB, found in Haemophilus influenzae (strain PittEE).